The sequence spans 1960 residues: Myosin-9 (1960 aa).

An N-acetylalanine modification is found at A2. The tract at residues 2 to 838 (AQQAADKYLY…RLFTKVKPLL (837 aa)) is mediates interaction with LIMCH1. K8 is subject to N6-acetyllysine. Phosphotyrosine is present on Y11. The region spanning 27–77 (AAKKLVWVPSDKSGFEPASLKEEVGEEAIVELVENGKKVKVNKDDIQKMNP) is the Myosin N-terminal SH3-like domain. The Myosin motor domain maps to 81–776 (SKVEDMAELT…VLAHLEEERD (696 aa)). K102 carries the post-translational modification N6-acetyllysine. 174-181 (GESGAGKT) is a binding site for ATP. An N6-acetyllysine mark is found at K299, K435, and K613. S628 is modified (phosphoserine). Residues 654 to 676 (LAKLMATLRNTNPNFVRCIIPNH) form an actin-binding region. The residue at position 754 (Y754) is a Phosphotyrosine. An IQ domain is found at 779–808 (ITDVIIGFQACCRGYLARKAFAKRQQQLTA). A coiled-coil region spans residues 837–1926 (LLQVSRQEEE…LKNKLRRGDL (1090 aa)). An N6-succinyllysine modification is found at K850. N6-acetyllysine occurs at positions 860, 975, and 1024. The span at 1035–1055 (RLRREEKQRQELEKTRRKLEG) shows a compositional bias: basic and acidic residues. Residues 1035–1057 (RLRREEKQRQELEKTRRKLEGDS) are disordered. Phosphoserine is present on S1114. The disordered stretch occupies residues 1118-1137 (EDLESERASRNKAEKQKRDL). The span at 1122 to 1137 (SERASRNKAEKQKRDL) shows a compositional bias: basic and acidic residues. N6-acetyllysine is present on residues K1234, K1249, K1357, K1392, K1404, K1410, K1459, and K1638. Position 1669 is an N6-succinyllysine (K1669). S1714 carries the post-translational modification Phosphoserine. 3 positions are modified to N6-acetyllysine: K1793, K1802, and K1845. Positions 1877–1960 (RQLEEAEEEA…ADGAEAKPAE (84 aa)) are disordered. An Omega-N-methylarginine modification is found at R1923. S1943 carries the post-translational modification Phosphoserine. Residues 1948 to 1960 (DGKADGAEAKPAE) show a composition bias toward basic and acidic residues.

This sequence belongs to the TRAFAC class myosin-kinesin ATPase superfamily. Myosin family. Myosin is a hexameric protein that consists of 2 heavy chain subunits (MHC), 2 alkali light chain subunits (MLC) and 2 regulatory light chain subunits (MLC-2). Interacts with RASIP1. Interacts with DDR1. Interacts with PDLIM2. Interacts with SVIL. Interacts with HTRA3. Interacts with Myo7a. Interacts with CFAP95. Interacts with LIMCH1; independently of the integration of MYH9 into the myosin complex. Interacts with RAB3A. Interacts with ZBED4. Interacts with S100A4; this interaction increases cell motility. In terms of assembly, (Microbial infection) Interacts with herpes simplex virus 1/HHV-1 envelope glycoprotein B. Post-translationally, ISGylated. In terms of processing, ubiquitination. As to expression, in the kidney, expressed in the glomeruli. Also expressed in leukocytes.

The protein localises to the cytoplasm. Its subcellular location is the cytoskeleton. The protein resides in the cell cortex. It is found in the cytoplasmic vesicle. It localises to the secretory vesicle. The protein localises to the cortical granule. Its subcellular location is the cell membrane. Cellular myosin that appears to play a role in cytokinesis, cell shape, and specialized functions such as secretion and capping. Required for cortical actin clearance prior to oocyte exocytosis. Promotes cell motility in conjunction with S100A4. During cell spreading, plays an important role in cytoskeleton reorganization, focal contact formation (in the margins but not the central part of spreading cells), and lamellipodial retraction; this function is mechanically antagonized by MYH10. Its function is as follows. (Microbial infection) Acts as a receptor for herpes simplex virus 1/HHV-1 envelope glycoprotein B. The protein is Myosin-9 (MYH9) of Homo sapiens (Human).